The following is a 415-amino-acid chain: F-box protein ETP1 (415 aa).

Residues 1 to 46 (MTIPDLCNDLVDEILCRVPARNLKRLRSTSKRWNRLFKDDRRFARE) enclose the F-box domain.

In terms of assembly, interacts with EIN2 (via C-terminus).

In terms of biological role, negative regulator of EIN2 protein stability. This Arabidopsis thaliana (Mouse-ear cress) protein is F-box protein ETP1.